The primary structure comprises 572 residues: Glutamate--tRNA ligase (572 aa).

Positions 112–122 (PNPNGPPSLGN) match the 'HIGH' region motif.

Belongs to the class-I aminoacyl-tRNA synthetase family. Glutamate--tRNA ligase type 2 subfamily.

The protein localises to the cytoplasm. The catalysed reaction is tRNA(Glu) + L-glutamate + ATP = L-glutamyl-tRNA(Glu) + AMP + diphosphate. Catalyzes the attachment of glutamate to tRNA(Glu) in a two-step reaction: glutamate is first activated by ATP to form Glu-AMP and then transferred to the acceptor end of tRNA(Glu). The protein is Glutamate--tRNA ligase of Methanocella arvoryzae (strain DSM 22066 / NBRC 105507 / MRE50).